The primary structure comprises 673 residues: Mechanosensitive ion channel protein 2, chloroplastic (673 aa).

The N-terminal 75 residues, 1–75 (MALYGTLQLS…SVPCRTTAFR (75 aa)), are a transit peptide targeting the chloroplast. Transmembrane regions (helical) follow at residues 107-127 (FPFVYKLVPAVALLVFSLWGL), 152-172 (YHVMTSYVQPLLLWLGALFIC), 193-213 (LNFVRSLSTVLAFAYCLSSLI), 240-260 (ALYSAVWVAAVSLFMELLGFS), and 264-284 (WLTAGGLGTVLITLAGREILT). Residues 492–673 (KINGEDKSKS…QPNSGASTEP (182 aa)) are disordered. 3 stretches are compositionally biased toward basic and acidic residues: residues 510-525 (AEQENKGSNPKSKETS), 564-576 (TPKDTETSGTEKP), and 617-642 (GSKRTLPIEEEIHSPPMETDAKELTG). Ser-571 carries the phosphoserine modification. Residues 661–673 (SQSQPNSGASTEP) are compositionally biased toward polar residues.

Belongs to the MscS (TC 1.A.23) family. Widely expressed.

It localises to the plastid. Its subcellular location is the chloroplast membrane. Mechanosensitive channel that opens in response to stretch forces in the membrane lipid bilayer. Controls plastid size, shape, and perhaps division during normal plant development by altering ion flux in response to changes in membrane tension. Acts as a component of the chloroplast division machinery. In Arabidopsis thaliana (Mouse-ear cress), this protein is Mechanosensitive ion channel protein 2, chloroplastic (MSL2).